The primary structure comprises 616 residues: Dihydroxy-acid dehydratase (616 aa).

Residue aspartate 81 participates in Mg(2+) binding. Position 122 (cysteine 122) interacts with [2Fe-2S] cluster. Mg(2+) contacts are provided by aspartate 123 and lysine 124. Position 124 is an N6-carboxylysine (lysine 124). Cysteine 195 is a [2Fe-2S] cluster binding site. Glutamate 491 serves as a coordination point for Mg(2+). Catalysis depends on serine 517, which acts as the Proton acceptor.

The protein belongs to the IlvD/Edd family. Homodimer. It depends on [2Fe-2S] cluster as a cofactor. Requires Mg(2+) as cofactor.

The catalysed reaction is (2R)-2,3-dihydroxy-3-methylbutanoate = 3-methyl-2-oxobutanoate + H2O. The enzyme catalyses (2R,3R)-2,3-dihydroxy-3-methylpentanoate = (S)-3-methyl-2-oxopentanoate + H2O. The protein operates within amino-acid biosynthesis; L-isoleucine biosynthesis; L-isoleucine from 2-oxobutanoate: step 3/4. It functions in the pathway amino-acid biosynthesis; L-valine biosynthesis; L-valine from pyruvate: step 3/4. Functionally, functions in the biosynthesis of branched-chain amino acids. Catalyzes the dehydration of (2R,3R)-2,3-dihydroxy-3-methylpentanoate (2,3-dihydroxy-3-methylvalerate) into 2-oxo-3-methylpentanoate (2-oxo-3-methylvalerate) and of (2R)-2,3-dihydroxy-3-methylbutanoate (2,3-dihydroxyisovalerate) into 2-oxo-3-methylbutanoate (2-oxoisovalerate), the penultimate precursor to L-isoleucine and L-valine, respectively. This Tolumonas auensis (strain DSM 9187 / NBRC 110442 / TA 4) protein is Dihydroxy-acid dehydratase.